The sequence spans 689 residues: Long-chain fatty acid transport protein 5 (689 aa).

At 1–29 the chain is on the cytoplasmic side; that stretch reads MGIWKKLTLLLLLLLLVGLGQPPWPAAMA. A run of 2 helical transmembrane segments spans residues 30–50 and 55–75; these read LALR…LALL and ISSW…LFLL. Over 76–689 the chain is Cytoplasmic; that stretch reads PLQPPPGLRW…QAVCEGTWNL (614 aa). 292-303 is a binding site for AMP; the sequence is IFTSGTTGLPKP.

Belongs to the ATP-dependent AMP-binding enzyme family. In terms of tissue distribution, liver-specific (at protein level). In liver expressed in a periportal distribution.

It is found in the endoplasmic reticulum membrane. It localises to the microsome. The protein resides in the cell membrane. The catalysed reaction is a fatty acid(in) = a fatty acid(out). It carries out the reaction cholate + ATP + CoA = choloyl-CoA + AMP + diphosphate. The enzyme catalyses (25R)-3alpha,7alpha,12alpha-trihydroxy-5beta-cholestan-26-oate + ATP + CoA = (25R)-3alpha,7alpha,12alpha-trihydroxy-5beta-cholestan-26-oyl-CoA + AMP + diphosphate. It catalyses the reaction chenodeoxycholate + ATP + CoA = chenodeoxycholoyl-CoA + AMP + diphosphate. The catalysed reaction is deoxycholate + ATP + CoA = deoxycholoyl-CoA + AMP + diphosphate. It carries out the reaction lithocholate + ATP + CoA = lithocholoyl-CoA + AMP + diphosphate. The enzyme catalyses a very long-chain fatty acid + ATP + CoA = a very long-chain fatty acyl-CoA + AMP + diphosphate. It catalyses the reaction tetracosanoate + ATP + CoA = tetracosanoyl-CoA + AMP + diphosphate. The catalysed reaction is hexacosanoate + ATP + CoA = hexacosanoyl-CoA + AMP + diphosphate. It carries out the reaction a long-chain fatty acid + ATP + CoA = a long-chain fatty acyl-CoA + AMP + diphosphate. The enzyme catalyses octadecanoate + ATP + CoA = octadecanoyl-CoA + AMP + diphosphate. It catalyses the reaction eicosanoate + ATP + CoA = eicosanoyl-CoA + AMP + diphosphate. Its function is as follows. Mediates the import of long-chain fatty acids (LCFA) by facilitating their transport across cell membranes. Also catalyzes the ATP-dependent formation of fatty acyl-CoA using LCFA and very-long-chain fatty acids (VLCFA) as substrates. Mainly functions as a bile acyl-CoA synthetase catalyzing the activation of bile acids via ATP-dependent formation of bile acid CoA thioesters which is necessary for their subsequent conjugation with glycine or taurine. Both primary bile acids (cholic acid and chenodeoxycholic acid) and secondary bile acids (deoxycholic acid and lithocholic acid) are the principal substrates. In vitro, activates 3-alpha,7-alpha,12-alpha-trihydroxy-5-beta-cholestanate ((25R)-3alpha,7alpha,12alpha-trihydroxy-5beta-cholestan-26-oate or THCA), the C27 precursor of cholic acid deriving from the de novo synthesis from cholesterol. Plays an important role in hepatic fatty acid uptake and bile acid reconjugation and recycling but not in de novo synthesis of bile acids. This chain is Long-chain fatty acid transport protein 5 (Slc27a5), found in Mus musculus (Mouse).